An 82-amino-acid chain; its full sequence is Immediate early response 3-interacting protein 1 (82 aa).

2 helical membrane-spanning segments follow: residues 2-22 (AFTL…IAVL) and 62-82 (VMRV…LLFG).

Belongs to the YOS1 family.

It is found in the endoplasmic reticulum membrane. Regulator of endoplasmic reticulum secretion that acts as a key determinant of brain size. Required for secretion of extracellular matrix proteins. Required for correct brain development by depositing sufficient extracellular matrix proteins for tissue integrity and the proliferation of neural progenitors. Acts as a regulator of the unfolded protein response (UPR). The protein is Immediate early response 3-interacting protein 1 of Bos taurus (Bovine).